The following is a 548-amino-acid chain: Probable malate:quinone oxidoreductase (548 aa).

Residues 520–548 (YDRPQAADSTPKPQLKPQPVQKEVADIAL) form a disordered region. The segment covering 530 to 541 (PKPQLKPQPVQK) has biased composition (low complexity).

The protein belongs to the MQO family. It depends on FAD as a cofactor.

The catalysed reaction is (S)-malate + a quinone = a quinol + oxaloacetate. It functions in the pathway carbohydrate metabolism; tricarboxylic acid cycle; oxaloacetate from (S)-malate (quinone route): step 1/1. The sequence is that of Probable malate:quinone oxidoreductase from Shigella dysenteriae serotype 1 (strain Sd197).